Consider the following 517-residue polypeptide: Protein MGF 505-2R (517 aa).

It belongs to the asfivirus MGF 505 family.

In terms of biological role, plays a role in virus cell tropism, and may be required for efficient virus replication in macrophages. The chain is Protein MGF 505-2R from African swine fever virus (isolate Warthog/Namibia/Wart80/1980) (ASFV).